We begin with the raw amino-acid sequence, 288 residues long: MWDLREKFERDGFVVVENVFNDQEIDEMKKSISKIVNDMDLAEHPKSVFSTYDEDKHAADSYFLNSSDKIRFFFEEGAVDKDGELTVPKDKALNKIGHGLHFLDPTFEKMTFNSKIQNIFKEIGYQEPGVVQSMYIFKQPKIGGAVTDHVDSTFLRVDPIDHLTGVWIAIDEASVENGCLSFIPGSHKDTSSANYRFVRTHDTSGGALLKFIGTRPTYDQSKFQHVPISKGSLILIHGLVVHKSEANTSEKSRHAYTIHVMERKNTKWSEQNWLQETENYKFPDLYKD.

2-oxoglutarate-binding positions include Lys95, Met134, His149–Asp151, and Trp167. Residues His149 and Asp151 each contribute to the Fe cation site. A Fe cation-binding site is contributed by His242. Residues Ser244 and Arg253 each coordinate 2-oxoglutarate.

This sequence belongs to the PhyH family. PHYHD1 subfamily. Fe cation serves as cofactor.

Has alpha-ketoglutarate-dependent dioxygenase activity. Does not show detectable activity towards fatty acid CoA thioesters. Is not expected to be active with phytanoyl CoA. The protein is Phytanoyl-CoA dioxygenase domain-containing protein 1 homolog of Caenorhabditis elegans.